A 529-amino-acid polypeptide reads, in one-letter code: Lysine--tRNA ligase (529 aa).

Positions 44–52 (PSGLPHIGT) match the 'HIGH' region motif. A 'KMSKS' region motif is present at residues 290 to 294 (KISKS). Lys293 contacts ATP.

The protein belongs to the class-I aminoacyl-tRNA synthetase family.

It is found in the cytoplasm. The enzyme catalyses tRNA(Lys) + L-lysine + ATP = L-lysyl-tRNA(Lys) + AMP + diphosphate. This is Lysine--tRNA ligase from Rickettsia akari (strain Hartford).